A 1337-amino-acid chain; its full sequence is Protein cordon-bleu (1337 aa).

The segment at Met-1–His-41 is disordered. A phosphoserine mark is found at Ser-47, Ser-50, Ser-212, Ser-235, Ser-272, and Ser-294. 2 disordered regions span residues Ser-260–Glu-556 and Ile-647–Gln-768. Over residues Cys-288 to Ser-317 the composition is skewed to polar residues. The KKRRAP 1 motif lies at Lys-323–Pro-328. Phosphoserine is present on residues Ser-346 and Ser-349. Residues Lys-356 to Pro-361 carry the KKRRAP 2 motif. Pro residues predominate over residues Pro-361–Val-374. Position 372 is a phosphoserine (Ser-372). Positions Asn-377 to Lys-387 are enriched in basic and acidic residues. Pro residues predominate over residues Leu-411–Asp-423. The span at Glu-469–Glu-480 shows a compositional bias: acidic residues. Residues Val-484–Ser-500 show a composition bias toward polar residues. Thr-522 bears the Phosphothreonine mark. Residues Gly-526 to Ser-541 are compositionally biased toward low complexity. 2 stretches are compositionally biased toward polar residues: residues Ile-647–Val-666 and Gln-687–Val-710. Position 649 is a phosphoserine (Ser-649). Over residues Leu-714–Gln-736 the composition is skewed to basic and acidic residues. Residue Ser-816 is modified to Phosphoserine. Disordered stretches follow at residues Thr-892–Val-923 and Lys-967–Ala-991. Phosphoserine is present on Ser-1038. Polar residues predominate over residues Gly-1070–Gln-1090. Disordered regions lie at residues Gly-1070 to Lys-1094, Met-1113 to Thr-1133, Lys-1145 to Lys-1168, and Ala-1192 to Glu-1221. Ser-1128 bears the Phosphoserine mark. WH2 domains are found at residues Leu-1185–Thr-1205 and Glu-1225–Val-1245. Residues Gly-1197 to Pro-1214 are compositionally biased toward basic and acidic residues. The tract at residues Gly-1262–Ser-1310 is disordered. Pro residues predominate over residues Leu-1276–Gln-1291. The segment covering Val-1297–Ser-1310 has biased composition (polar residues). Ser-1303 carries the phosphoserine modification. The region spanning Ala-1313–Val-1333 is the WH2 3 domain.

As to quaternary structure, identified in a complex composed of COBL, PACSIN1 and WASL. Interacts with PACSIN1, PACSIN2 and PACSIN3. Identified in a complex composed of ACTA1, COBL, GSN and TMSB4X. Interacts (via WH2 domains) with actin monomers. Interacts with DBNL. Detected in brain cortex and in the Purkinje cell layer in the cerebellum. Detected in hippocampus neurons, and at lower levels in testis, lung and spleen (at protein level). Detected in embryonic neural tube.

Its subcellular location is the cell membrane. It is found in the cytoplasm. The protein resides in the cytoskeleton. The protein localises to the cell projection. It localises to the ruffle. Functionally, plays an important role in the reorganization of the actin cytoskeleton. Binds to and sequesters actin monomers (G actin). Nucleates actin polymerization by assembling three actin monomers in cross-filament orientation and thereby promotes growth of actin filaments at the barbed end. Can also mediate actin depolymerization at barbed ends and severing of actin filaments. Promotes formation of cell ruffles. Regulates neuron morphogenesis and increases branching of axons and dendrites. Regulates dendrite branching in Purkinje cells. In Mus musculus (Mouse), this protein is Protein cordon-bleu (Cobl).